Consider the following 254-residue polypeptide: 3-dehydroquinate dehydratase (254 aa).

3-dehydroquinate-binding positions include 47 to 49 (EWR) and Arg-83. His-144 serves as the catalytic Proton donor/acceptor. Residue Lys-171 is the Schiff-base intermediate with substrate of the active site. Arg-214, Ser-233, and Gln-237 together coordinate 3-dehydroquinate.

This sequence belongs to the type-I 3-dehydroquinase family. As to quaternary structure, homodimer.

It carries out the reaction 3-dehydroquinate = 3-dehydroshikimate + H2O. It participates in metabolic intermediate biosynthesis; chorismate biosynthesis; chorismate from D-erythrose 4-phosphate and phosphoenolpyruvate: step 3/7. Involved in the third step of the chorismate pathway, which leads to the biosynthesis of aromatic amino acids. Catalyzes the cis-dehydration of 3-dehydroquinate (DHQ) and introduces the first double bond of the aromatic ring to yield 3-dehydroshikimate. This Bacillus licheniformis (strain ATCC 14580 / DSM 13 / JCM 2505 / CCUG 7422 / NBRC 12200 / NCIMB 9375 / NCTC 10341 / NRRL NRS-1264 / Gibson 46) protein is 3-dehydroquinate dehydratase.